The sequence spans 122 residues: Large ribosomal subunit protein bL12 (122 aa).

Residues 94 to 122 (GNVKEGLSKEDAEEMKEKLEEAGATVELK) form a disordered region. Residues 99–114 (GLSKEDAEEMKEKLEE) are compositionally biased toward basic and acidic residues.

The protein belongs to the bacterial ribosomal protein bL12 family. As to quaternary structure, homodimer. Part of the ribosomal stalk of the 50S ribosomal subunit. Forms a multimeric L10(L12)X complex, where L10 forms an elongated spine to which 2 to 4 L12 dimers bind in a sequential fashion. Binds GTP-bound translation factors.

Its function is as follows. Forms part of the ribosomal stalk which helps the ribosome interact with GTP-bound translation factors. Is thus essential for accurate translation. The sequence is that of Large ribosomal subunit protein bL12 from Halanaerobium praevalens.